Here is a 216-residue protein sequence, read N- to C-terminus: Probable transaldolase (216 aa).

Catalysis depends on Lys83, which acts as the Schiff-base intermediate with substrate.

It belongs to the transaldolase family. Type 3B subfamily.

It is found in the cytoplasm. It carries out the reaction D-sedoheptulose 7-phosphate + D-glyceraldehyde 3-phosphate = D-erythrose 4-phosphate + beta-D-fructose 6-phosphate. Its pathway is carbohydrate degradation; pentose phosphate pathway; D-glyceraldehyde 3-phosphate and beta-D-fructose 6-phosphate from D-ribose 5-phosphate and D-xylulose 5-phosphate (non-oxidative stage): step 2/3. In terms of biological role, transaldolase is important for the balance of metabolites in the pentose-phosphate pathway. The protein is Probable transaldolase of Caldanaerobacter subterraneus subsp. tengcongensis (strain DSM 15242 / JCM 11007 / NBRC 100824 / MB4) (Thermoanaerobacter tengcongensis).